The chain runs to 356 residues: UDP-N-acetylglucosamine--N-acetylmuramyl-(pentapeptide) pyrophosphoryl-undecaprenol N-acetylglucosamine transferase (356 aa).

Residues 13 to 15 (TGG), asparagine 125, arginine 161, serine 189, isoleucine 243, and glutamine 288 contribute to the UDP-N-acetyl-alpha-D-glucosamine site.

Belongs to the glycosyltransferase 28 family. MurG subfamily.

The protein localises to the cell inner membrane. It carries out the reaction di-trans,octa-cis-undecaprenyl diphospho-N-acetyl-alpha-D-muramoyl-L-alanyl-D-glutamyl-meso-2,6-diaminopimeloyl-D-alanyl-D-alanine + UDP-N-acetyl-alpha-D-glucosamine = di-trans,octa-cis-undecaprenyl diphospho-[N-acetyl-alpha-D-glucosaminyl-(1-&gt;4)]-N-acetyl-alpha-D-muramoyl-L-alanyl-D-glutamyl-meso-2,6-diaminopimeloyl-D-alanyl-D-alanine + UDP + H(+). The protein operates within cell wall biogenesis; peptidoglycan biosynthesis. Functionally, cell wall formation. Catalyzes the transfer of a GlcNAc subunit on undecaprenyl-pyrophosphoryl-MurNAc-pentapeptide (lipid intermediate I) to form undecaprenyl-pyrophosphoryl-MurNAc-(pentapeptide)GlcNAc (lipid intermediate II). The sequence is that of UDP-N-acetylglucosamine--N-acetylmuramyl-(pentapeptide) pyrophosphoryl-undecaprenol N-acetylglucosamine transferase from Cupriavidus metallidurans (strain ATCC 43123 / DSM 2839 / NBRC 102507 / CH34) (Ralstonia metallidurans).